Here is a 334-residue protein sequence, read N- to C-terminus: Holliday junction branch migration complex subunit RuvB (334 aa).

Residues 4-184 (ADRLIQPQIQ…FGIPLRLEFY (181 aa)) form a large ATPase domain (RuvB-L) region. ATP-binding positions include R24, G65, K68, T69, T70, 131-133 (EDY), R174, Y184, and R221. Mg(2+) is bound at residue T69. The interval 185 to 255 (NIKDLSTIVT…VAEHALDLLD (71 aa)) is small ATPAse domain (RuvB-S). Residues 258 to 334 (SEGFDYMDRK…YQHFELIKPE (77 aa)) are head domain (RuvB-H). Residues R294, R313, and R318 each coordinate DNA.

Belongs to the RuvB family. As to quaternary structure, homohexamer. Forms an RuvA(8)-RuvB(12)-Holliday junction (HJ) complex. HJ DNA is sandwiched between 2 RuvA tetramers; dsDNA enters through RuvA and exits via RuvB. An RuvB hexamer assembles on each DNA strand where it exits the tetramer. Each RuvB hexamer is contacted by two RuvA subunits (via domain III) on 2 adjacent RuvB subunits; this complex drives branch migration. In the full resolvosome a probable DNA-RuvA(4)-RuvB(12)-RuvC(2) complex forms which resolves the HJ.

It is found in the cytoplasm. The catalysed reaction is ATP + H2O = ADP + phosphate + H(+). In terms of biological role, the RuvA-RuvB-RuvC complex processes Holliday junction (HJ) DNA during genetic recombination and DNA repair, while the RuvA-RuvB complex plays an important role in the rescue of blocked DNA replication forks via replication fork reversal (RFR). RuvA specifically binds to HJ cruciform DNA, conferring on it an open structure. The RuvB hexamer acts as an ATP-dependent pump, pulling dsDNA into and through the RuvAB complex. RuvB forms 2 homohexamers on either side of HJ DNA bound by 1 or 2 RuvA tetramers; 4 subunits per hexamer contact DNA at a time. Coordinated motions by a converter formed by DNA-disengaged RuvB subunits stimulates ATP hydrolysis and nucleotide exchange. Immobilization of the converter enables RuvB to convert the ATP-contained energy into a lever motion, pulling 2 nucleotides of DNA out of the RuvA tetramer per ATP hydrolyzed, thus driving DNA branch migration. The RuvB motors rotate together with the DNA substrate, which together with the progressing nucleotide cycle form the mechanistic basis for DNA recombination by continuous HJ branch migration. Branch migration allows RuvC to scan DNA until it finds its consensus sequence, where it cleaves and resolves cruciform DNA. This is Holliday junction branch migration complex subunit RuvB from Shewanella baltica (strain OS195).